A 57-amino-acid polypeptide reads, in one-letter code: uncharacterized protein (57 aa).

Residues 12-34 traverse the membrane as a helical segment; the sequence is VIAVLSLFVFAVAVFFVGMALLT.

Its subcellular location is the membrane. This is an uncharacterized protein from Pasteurella multocida (strain Pm70).